The chain runs to 103 residues: Large ribosomal subunit protein bL21 (103 aa).

It belongs to the bacterial ribosomal protein bL21 family. In terms of assembly, part of the 50S ribosomal subunit. Contacts protein L20.

Functionally, this protein binds to 23S rRNA in the presence of protein L20. This is Large ribosomal subunit protein bL21 from Clostridioides difficile (strain 630) (Peptoclostridium difficile).